The sequence spans 695 residues: Probable rhamnogalacturonate lyase C (695 aa).

The N-terminal stretch at M1–A21 is a signal peptide. N-linked (GlcNAc...) asparagine glycosylation is found at N28, N96, N118, N144, N199, N285, N532, and N638.

The protein belongs to the polysaccharide lyase 4 family.

The protein localises to the secreted. It carries out the reaction Endotype eliminative cleavage of L-alpha-rhamnopyranosyl-(1-&gt;4)-alpha-D-galactopyranosyluronic acid bonds of rhamnogalacturonan I domains in ramified hairy regions of pectin leaving L-rhamnopyranose at the reducing end and 4-deoxy-4,5-unsaturated D-galactopyranosyluronic acid at the non-reducing end.. Functionally, pectinolytic enzymes consist of four classes of enzymes: pectin lyase, polygalacturonase, pectin methylesterase and rhamnogalacturonase. Degrades the rhamnogalacturonan I (RG-I) backbone of pectin. This Aspergillus oryzae (strain ATCC 42149 / RIB 40) (Yellow koji mold) protein is Probable rhamnogalacturonate lyase C (rglC).